A 464-amino-acid polypeptide reads, in one-letter code: tRNA modification GTPase MnmE (464 aa).

The (6S)-5-formyl-5,6,7,8-tetrahydrofolate site is built by Arg-25, Glu-87, and Lys-130. The TrmE-type G domain occupies 226–386 (GLSVVLAGQP…LRAELLRIAG (161 aa)). Asn-236 is a binding site for K(+). GTP is bound by residues 236–241 (NVGKSS), 255–261 (TPIAGTT), and 280–283 (DTAG). Ser-240 contributes to the Mg(2+) binding site. The K(+) site is built by Thr-255, Ile-257, and Thr-260. Thr-261 provides a ligand contact to Mg(2+). Lys-464 contacts (6S)-5-formyl-5,6,7,8-tetrahydrofolate.

It belongs to the TRAFAC class TrmE-Era-EngA-EngB-Septin-like GTPase superfamily. TrmE GTPase family. As to quaternary structure, homodimer. Heterotetramer of two MnmE and two MnmG subunits. K(+) is required as a cofactor.

The protein resides in the cytoplasm. Its function is as follows. Exhibits a very high intrinsic GTPase hydrolysis rate. Involved in the addition of a carboxymethylaminomethyl (cmnm) group at the wobble position (U34) of certain tRNAs, forming tRNA-cmnm(5)s(2)U34. The polypeptide is tRNA modification GTPase MnmE (Burkholderia orbicola (strain MC0-3)).